A 951-amino-acid polypeptide reads, in one-letter code: Bifunctional glutamine synthetase adenylyltransferase/adenylyl-removing enzyme (951 aa).

An adenylyl removase region spans residues 1–445 (MSILPLPALP…VFDELIGDDA (445 aa)). The segment at 454–951 (HSSYSSLWQD…VSWNKWLMGA (498 aa)) is adenylyl transferase.

The protein belongs to the GlnE family. The cofactor is Mg(2+).

The catalysed reaction is [glutamine synthetase]-O(4)-(5'-adenylyl)-L-tyrosine + phosphate = [glutamine synthetase]-L-tyrosine + ADP. It catalyses the reaction [glutamine synthetase]-L-tyrosine + ATP = [glutamine synthetase]-O(4)-(5'-adenylyl)-L-tyrosine + diphosphate. Functionally, involved in the regulation of glutamine synthetase GlnA, a key enzyme in the process to assimilate ammonia. When cellular nitrogen levels are high, the C-terminal adenylyl transferase (AT) inactivates GlnA by covalent transfer of an adenylyl group from ATP to specific tyrosine residue of GlnA, thus reducing its activity. Conversely, when nitrogen levels are low, the N-terminal adenylyl removase (AR) activates GlnA by removing the adenylyl group by phosphorolysis, increasing its activity. The regulatory region of GlnE binds the signal transduction protein PII (GlnB) which indicates the nitrogen status of the cell. The protein is Bifunctional glutamine synthetase adenylyltransferase/adenylyl-removing enzyme of Pectobacterium atrosepticum (strain SCRI 1043 / ATCC BAA-672) (Erwinia carotovora subsp. atroseptica).